Consider the following 154-residue polypeptide: Endoribonuclease YbeY (154 aa).

Positions 120, 124, and 130 each coordinate Zn(2+).

Belongs to the endoribonuclease YbeY family. Zn(2+) serves as cofactor.

It is found in the cytoplasm. In terms of biological role, single strand-specific metallo-endoribonuclease involved in late-stage 70S ribosome quality control and in maturation of the 3' terminus of the 16S rRNA. This is Endoribonuclease YbeY from Oceanobacillus iheyensis (strain DSM 14371 / CIP 107618 / JCM 11309 / KCTC 3954 / HTE831).